The primary structure comprises 129 residues: Protein RALF-like 34 (129 aa).

The signal sequence occupies residues 1–23 (MAASSLNLLLILSLLTFISLQRS). The propeptide at 24 to 76 (ESLSDNPSLTLLPDGFDWPISHSDEFDIIDGEESFEVTEEDDGVTDRRSLYWR) is removed in mature form. Intrachain disulfides connect C94–C107 and C121–C127.

Belongs to the plant rapid alkalinization factor (RALF) family. Proteolytically cleaved, probably by S1P, a subtilisin-like serine protease (subtilase). As to expression, expressed in roots, stems and leaves.

The protein resides in the secreted. Cell signaling peptide that may regulate plant stress, growth, and development. Mediates a rapid alkalinization of extracellular space by mediating a transient increase in the cytoplasmic Ca(2+) concentration leading to a calcium-dependent signaling events through a cell surface receptor and a concomitant activation of some intracellular mitogen-activated protein kinases. This Arabidopsis thaliana (Mouse-ear cress) protein is Protein RALF-like 34 (RALFL34).